The following is a 995-amino-acid chain: Integrator complex subunit 8 (995 aa).

Thr18 is modified (phosphothreonine). The WFEF motif motif lies at 24–29 (WFEFLL). TPR repeat units lie at residues 250–288 (CQVCYDLGAAYFQQGSTNSAVYENAREKFFRTKELIAEI), 320–356 (SQQLTPYSQVHICLRSGNYQEVIQIFIEDNLTLSLPV), 570–603 (VYILMAKGLHCSTVKDFSHAKQLFAACLELVTEF), and 833–866 (HSWLIIQADIYFATNQYSAALHYYLQAGAVCSDF).

This sequence belongs to the Integrator subunit 8 family. As to quaternary structure, component of the Integrator complex, composed of core subunits INTS1, INTS2, INTS3, INTS4, INTS5, INTS6, INTS7, INTS8, INTS9/RC74, INTS10, INTS11/CPSF3L, INTS12, INTS13, INTS14 and INTS15. The core complex associates with protein phosphatase 2A subunits PPP2CA and PPP2R1A, to form the Integrator-PP2A (INTAC) complex.

It is found in the nucleus. The protein resides in the chromosome. In terms of biological role, component of the integrator complex, a multiprotein complex that terminates RNA polymerase II (Pol II) transcription in the promoter-proximal region of genes. The integrator complex provides a quality checkpoint during transcription elongation by driving premature transcription termination of transcripts that are unfavorably configured for transcriptional elongation: the complex terminates transcription by (1) catalyzing dephosphorylation of the C-terminal domain (CTD) of Pol II subunit POLR2A/RPB1 and SUPT5H/SPT5, (2) degrading the exiting nascent RNA transcript via endonuclease activity and (3) promoting the release of Pol II from bound DNA. The integrator complex is also involved in terminating the synthesis of non-coding Pol II transcripts, such as enhancer RNAs (eRNAs), small nuclear RNAs (snRNAs), telomerase RNAs and long non-coding RNAs (lncRNAs). Within the integrator complex, INTS8 is required for the recruitment of protein phosphatase 2A (PP2A) to transcription pause-release checkpoint. The protein is Integrator complex subunit 8 of Homo sapiens (Human).